We begin with the raw amino-acid sequence, 410 residues long: Testis-specific protein TEX28 (410 aa).

Residues 1 to 43 (MVLKAEHTRSPSATLPSNVPSCRSLSSSEDGPSGPSSLADGGL) form a disordered region. Positions 10 to 23 (SPSATLPSNVPSCR) are enriched in polar residues. Low complexity predominate over residues 24-38 (SLSSSEDGPSGPSSL). Residues 93–128 (QAFEKVNQRASATIAQIEHRLHQCHQQLQELEEGCR) adopt a coiled-coil conformation. A disordered region spans residues 137–164 (ESDPANCEPPSEKALLSEPPEPGGEDGP). Residues 185–245 (QGTCLETEDV…LLLESLQEEK (61 aa)) adopt a coiled-coil conformation. A helical transmembrane segment spans residues 336-358 (LSLATVLLVFVSTLCACPSSLIS).

It belongs to the TEX28 family. As to expression, testis specific.

The protein localises to the membrane. In Homo sapiens (Human), this protein is Testis-specific protein TEX28 (TEX28).